We begin with the raw amino-acid sequence, 98 residues long: NADH-ubiquinone oxidoreductase chain 4L (98 aa).

3 helical membrane-spanning segments follow: residues 2–22 (PSIS…MLIF), 29–49 (SLLC…LTIL), and 61–81 (ILLL…LVTV).

Belongs to the complex I subunit 4L family. Core subunit of respiratory chain NADH dehydrogenase (Complex I) which is composed of 45 different subunits.

The protein localises to the mitochondrion inner membrane. It catalyses the reaction a ubiquinone + NADH + 5 H(+)(in) = a ubiquinol + NAD(+) + 4 H(+)(out). In terms of biological role, core subunit of the mitochondrial membrane respiratory chain NADH dehydrogenase (Complex I) which catalyzes electron transfer from NADH through the respiratory chain, using ubiquinone as an electron acceptor. Part of the enzyme membrane arm which is embedded in the lipid bilayer and involved in proton translocation. The polypeptide is NADH-ubiquinone oxidoreductase chain 4L (MT-ND4L) (Lemur catta (Ring-tailed lemur)).